The primary structure comprises 296 residues: Aspartate and glycine-rich protein (296 aa).

Residues 1–77 show a composition bias toward gly residues; sequence GDGENGNGNG…GNGNGNGNGN (77 aa). 2 disordered regions span residues 1–219 and 233–296; these read GDGE…DNGG and RARA…YTSY. 2 stretches are compositionally biased toward acidic residues: residues 80–96 and 103–194; these read FDDD…DDWN and NGDD…DDRW. The segment covering 198-210 has biased composition (gly residues); that stretch reads NGNGNGNGNGNGN. A compositionally biased stretch (low complexity) spans 233-243; sequence RARAAASAAGR. A compositionally biased stretch (gly residues) spans 244–259; that stretch reads SRGGSGGSGGSGGSGG. The segment covering 270–281 has biased composition (low complexity); sequence RAFASARASSGN.

Component of the acid-soluble and acid-insoluble organic matrix of calcified shell layers (at protein level).

The protein localises to the secreted. The sequence is that of Aspartate and glycine-rich protein from Haliotis asinina (Donkey's ear abalone).